The following is a 428-amino-acid chain: Adenylosuccinate synthetase, chloroplastic (428 aa).

Residues 17-23 (GDEGKGK) and 45-47 (GHT) contribute to the GTP site. The active-site Proton acceptor is Asp18. Residues Asp18 and Gly45 each contribute to the Mg(2+) site. IMP is bound by residues 18–21 (DEGK), 43–46 (NAGH), Thr135, Arg149, Asn226, Thr241, and Arg305. His46 serves as the catalytic Proton donor. 301–307 (TTTGRPR) serves as a coordination point for substrate. Residues Arg307, 333 to 335 (KLD), and 416 to 418 (GVG) each bind GTP.

Belongs to the adenylosuccinate synthetase family. Homodimer. It depends on Mg(2+) as a cofactor.

The protein localises to the plastid. The protein resides in the chloroplast. The catalysed reaction is IMP + L-aspartate + GTP = N(6)-(1,2-dicarboxyethyl)-AMP + GDP + phosphate + 2 H(+). Its pathway is purine metabolism; AMP biosynthesis via de novo pathway; AMP from IMP: step 1/2. In terms of biological role, plays an important role in the de novo pathway and in the salvage pathway of purine nucleotide biosynthesis. Catalyzes the first committed step in the biosynthesis of AMP from IMP. In Ostreococcus lucimarinus (strain CCE9901), this protein is Adenylosuccinate synthetase, chloroplastic.